The sequence spans 218 residues: N-(5'-phosphoribosyl)anthranilate isomerase (218 aa).

Belongs to the TrpF family.

The enzyme catalyses N-(5-phospho-beta-D-ribosyl)anthranilate = 1-(2-carboxyphenylamino)-1-deoxy-D-ribulose 5-phosphate. It participates in amino-acid biosynthesis; L-tryptophan biosynthesis; L-tryptophan from chorismate: step 3/5. The polypeptide is N-(5'-phosphoribosyl)anthranilate isomerase (Bordetella bronchiseptica (strain ATCC BAA-588 / NCTC 13252 / RB50) (Alcaligenes bronchisepticus)).